The chain runs to 129 residues: SPbeta prophage-derived protein NrdI (129 aa).

The protein belongs to the NrdI family.

Probably involved in ribonucleotide reductase function. The sequence is that of SPbeta prophage-derived protein NrdI (nrdIB) from Bacillus subtilis (strain 168).